The primary structure comprises 497 residues: COP9 signalosome complex subunit 3 (497 aa).

The region spanning 233–408 (QAFDAFERCV…DGSPAYLTFL (176 aa)) is the PCI domain.

Belongs to the CSN3 family. As to quaternary structure, component of the COP9 signalosome (CSN) complex.

The protein resides in the cytoplasm. It localises to the nucleus. In terms of biological role, component of the COP9 signalosome (CSN) complex that acts as an regulator of the ubiquitin (Ubl) conjugation pathway by mediating the deneddylation of the cullin subunit of SCF-type E3 ubiquitin-protein ligase complexes. The CSN complex is involved in the regulation of the circadian clock through its control of the stability of the SCF(FWD1) complex. This Neurospora crassa (strain ATCC 24698 / 74-OR23-1A / CBS 708.71 / DSM 1257 / FGSC 987) protein is COP9 signalosome complex subunit 3 (csn-3).